The chain runs to 199 residues: Putative 3-methyladenine DNA glycosylase (199 aa).

It belongs to the DNA glycosylase MPG family.

The protein is Putative 3-methyladenine DNA glycosylase of Rhizobium etli (strain ATCC 51251 / DSM 11541 / JCM 21823 / NBRC 15573 / CFN 42).